A 390-amino-acid polypeptide reads, in one-letter code: Succinate--CoA ligase [ADP-forming] subunit beta (390 aa).

The 237-residue stretch at 9 to 245 (KHLLKKYNIP…TTQEDEHETM (237 aa)) folds into the ATP-grasp domain. ATP-binding positions include Lys46, 53–55 (GRG), Glu99, Ser102, and Glu107. Mg(2+) contacts are provided by Asn200 and Asp214. Substrate is bound by residues Asn265 and 322-324 (GIV).

This sequence belongs to the succinate/malate CoA ligase beta subunit family. As to quaternary structure, heterotetramer of two alpha and two beta subunits. Mg(2+) is required as a cofactor.

The enzyme catalyses succinate + ATP + CoA = succinyl-CoA + ADP + phosphate. It carries out the reaction GTP + succinate + CoA = succinyl-CoA + GDP + phosphate. It participates in carbohydrate metabolism; tricarboxylic acid cycle; succinate from succinyl-CoA (ligase route): step 1/1. In terms of biological role, succinyl-CoA synthetase functions in the citric acid cycle (TCA), coupling the hydrolysis of succinyl-CoA to the synthesis of either ATP or GTP and thus represents the only step of substrate-level phosphorylation in the TCA. The beta subunit provides nucleotide specificity of the enzyme and binds the substrate succinate, while the binding sites for coenzyme A and phosphate are found in the alpha subunit. In Coxiella burnetii (strain CbuK_Q154) (Coxiella burnetii (strain Q154)), this protein is Succinate--CoA ligase [ADP-forming] subunit beta.